Here is a 357-residue protein sequence, read N- to C-terminus: DnaJ homolog subfamily C member 25 (357 aa).

Residues 19–39 (WLLLAPLLLVPLLVRPAEALV) traverse the membrane as a helical segment. The 74-residue stretch at 48–121 (DCYEVLGVSR…ETRKDYDYML (74 aa)) folds into the J domain. The next 2 membrane-spanning stretches (helical) occupy residues 147–167 (VVILVSVCAISVFQYFSWWNS) and 241–261 (LLLFQVLLAPVHLCSYIAWYC).

It belongs to the DNAJC25 family.

Its subcellular location is the membrane. In Rattus norvegicus (Rat), this protein is DnaJ homolog subfamily C member 25 (Dnajc25).